The primary structure comprises 198 residues: Holliday junction branch migration complex subunit RuvA (198 aa).

Residues 1–61 (MILYRIGEII…EYQYATYAFK (61 aa)) form a domain I region. Residues 62-139 (DFKERLLFVD…KMISPKDAAK (78 aa)) are domain II. The flexible linker stretch occupies residues 140-144 (INETT). The domain III stretch occupies residues 144–198 (TNTLSEVKETLKMVGFKTKQIDGALSKISSTDDVEKMIEEAIKLMSTQNYESATA).

This sequence belongs to the RuvA family. As to quaternary structure, homotetramer. Forms an RuvA(8)-RuvB(12)-Holliday junction (HJ) complex. HJ DNA is sandwiched between 2 RuvA tetramers; dsDNA enters through RuvA and exits via RuvB. An RuvB hexamer assembles on each DNA strand where it exits the tetramer. Each RuvB hexamer is contacted by two RuvA subunits (via domain III) on 2 adjacent RuvB subunits; this complex drives branch migration. In the full resolvosome a probable DNA-RuvA(4)-RuvB(12)-RuvC(2) complex forms which resolves the HJ.

It localises to the cytoplasm. The RuvA-RuvB-RuvC complex processes Holliday junction (HJ) DNA during genetic recombination and DNA repair, while the RuvA-RuvB complex plays an important role in the rescue of blocked DNA replication forks via replication fork reversal (RFR). RuvA specifically binds to HJ cruciform DNA, conferring on it an open structure. The RuvB hexamer acts as an ATP-dependent pump, pulling dsDNA into and through the RuvAB complex. HJ branch migration allows RuvC to scan DNA until it finds its consensus sequence, where it cleaves and resolves the cruciform DNA. The chain is Holliday junction branch migration complex subunit RuvA from Mycoplasmopsis agalactiae (strain NCTC 10123 / CIP 59.7 / PG2) (Mycoplasma agalactiae).